Here is a 436-residue protein sequence, read N- to C-terminus: GTPase Der (436 aa).

2 EngA-type G domains span residues 4-167 (PVVA…PKVE) and 176-351 (IRFC…ESHN). GTP is bound by residues 10 to 17 (GRPNVGKS), 57 to 61 (DTGGI), 119 to 122 (NKVD), 182 to 189 (GRPNVGKS), 229 to 233 (DTAGM), and 294 to 297 (NKWD). The KH-like domain maps to 352–436 (IRVQTNVLND…PIRIIARARD (85 aa)).

This sequence belongs to the TRAFAC class TrmE-Era-EngA-EngB-Septin-like GTPase superfamily. EngA (Der) GTPase family. In terms of assembly, associates with the 50S ribosomal subunit.

Functionally, GTPase that plays an essential role in the late steps of ribosome biogenesis. The polypeptide is GTPase Der (Bacillus cytotoxicus (strain DSM 22905 / CIP 110041 / 391-98 / NVH 391-98)).